We begin with the raw amino-acid sequence, 393 residues long: MSLKLSLVSLSNTDLPIETKQQALIDIVLRFLTPQERASLFESITHQRETNLLARYPEYQSKSLSVLFELMDYRDLVRLDPNNLHDDVYLLELTVAECFPHWLDFWCACEIEAIKQKYSLENREPATELSFEDASYSAMLIDDISKSSMRVQLPSYPVAMTLSDAVALSNLELFVQGEKWYEILPLLSLSQKGKHFILLQTQTTPVLVASALIQDWNQRNTWLSYAPQFNSEKWRFCLPLHGYQELNRLDILASDLVTDYGSLTVFDQAFQTHITKTEMVCEVLRLTVSGSVQHKLYFLYLAQKELMNVLFQSGYKVGFTIIEQAFMLNFYQSIDSKAYFHSGYCDINGDGINTYRGFWNFESMVDTFKRTDFRDYKRRIRVIRQNTQVNEHA.

The protein belongs to the LuxM / VanM family.

It carries out the reaction a fatty acyl-[ACP] + S-adenosyl-L-methionine = an N-acyl-L-homoserine lactone + S-methyl-5'-thioadenosine + holo-[ACP] + H(+). This Vibrio parahaemolyticus serotype O3:K6 (strain RIMD 2210633) protein is Acyl-homoserine-lactone synthase OpaM (opaM).